A 91-amino-acid chain; its full sequence is Pyruvate kinase (91 aa).

Residue Arg-48 participates in substrate binding. Residues Asn-50, Ser-52, Asp-82, and Thr-83 each coordinate K(+). Residue 50-53 coordinates ATP; sequence NFSH. Arg-89 contacts ATP.

This sequence belongs to the pyruvate kinase family. As to quaternary structure, homotetramer. Requires Mg(2+) as cofactor. The cofactor is K(+).

The catalysed reaction is pyruvate + ATP = phosphoenolpyruvate + ADP + H(+). It functions in the pathway carbohydrate degradation; glycolysis; pyruvate from D-glyceraldehyde 3-phosphate: step 5/5. This chain is Pyruvate kinase, found in Leishmania braziliensis.